A 310-amino-acid polypeptide reads, in one-letter code: Proline dehydrogenase (310 aa).

Lys-98 serves as a coordination point for substrate. The active site involves Asp-135. FAD contacts are provided by residues Met-136, Gln-166, 187-192 (RMVKGA), 229-230 (TH), and 292-295 (RIAE). Residue Arg-187 is part of the active site. 291–292 (RR) provides a ligand contact to substrate.

This sequence belongs to the proline dehydrogenase family. The cofactor is FAD.

It catalyses the reaction L-proline + a quinone = (S)-1-pyrroline-5-carboxylate + a quinol + H(+). Its pathway is amino-acid degradation; L-proline degradation into L-glutamate; L-glutamate from L-proline: step 1/2. In terms of biological role, converts proline to delta-1-pyrroline-5-carboxylate. This Deinococcus radiodurans (strain ATCC 13939 / DSM 20539 / JCM 16871 / CCUG 27074 / LMG 4051 / NBRC 15346 / NCIMB 9279 / VKM B-1422 / R1) protein is Proline dehydrogenase.